Here is a 556-residue protein sequence, read N- to C-terminus: Formate--tetrahydrofolate ligase (556 aa).

Residue 65–72 (TPAGEGKS) coordinates ATP.

The protein belongs to the formate--tetrahydrofolate ligase family.

It catalyses the reaction (6S)-5,6,7,8-tetrahydrofolate + formate + ATP = (6R)-10-formyltetrahydrofolate + ADP + phosphate. Its pathway is one-carbon metabolism; tetrahydrofolate interconversion. This chain is Formate--tetrahydrofolate ligase, found in Clostridium acetobutylicum (strain ATCC 824 / DSM 792 / JCM 1419 / IAM 19013 / LMG 5710 / NBRC 13948 / NRRL B-527 / VKM B-1787 / 2291 / W).